The following is a 347-amino-acid chain: UDP-N-acetylenolpyruvoylglucosamine reductase (347 aa).

Residues 24 to 195 form the FAD-binding PCMH-type domain; the sequence is FDARARVAAR…VAVTFRLPKA (172 aa). Residue R171 is part of the active site. Catalysis depends on S247, which acts as the Proton donor. Residue E343 is part of the active site.

It belongs to the MurB family. FAD is required as a cofactor.

The protein resides in the cytoplasm. It carries out the reaction UDP-N-acetyl-alpha-D-muramate + NADP(+) = UDP-N-acetyl-3-O-(1-carboxyvinyl)-alpha-D-glucosamine + NADPH + H(+). The protein operates within cell wall biogenesis; peptidoglycan biosynthesis. Functionally, cell wall formation. The sequence is that of UDP-N-acetylenolpyruvoylglucosamine reductase from Burkholderia mallei (strain NCTC 10247).